The sequence spans 561 residues: Lysine--tRNA ligase (561 aa).

The Mg(2+) site is built by E409 and E416.

Belongs to the class-II aminoacyl-tRNA synthetase family. In terms of assembly, homodimer. It depends on Mg(2+) as a cofactor.

Its subcellular location is the cytoplasm. It catalyses the reaction tRNA(Lys) + L-lysine + ATP = L-lysyl-tRNA(Lys) + AMP + diphosphate. The sequence is that of Lysine--tRNA ligase from Trichormus variabilis (strain ATCC 29413 / PCC 7937) (Anabaena variabilis).